Consider the following 283-residue polypeptide: Phosphatidylglycerol--prolipoprotein diacylglyceryl transferase (283 aa).

Transmembrane regions (helical) follow at residues 17–37, 56–76, 92–112, and 117–137; these read LAVRWYALSYILGFILFTFLG, FLTWGILGVILGGRLGYVLFY, WEGGMSFHGGFLGVVIAIWLF, and GIGFLKLMDTVAPLVPLGLAS. R139 serves as a coordination point for a 1,2-diacyl-sn-glycero-3-phospho-(1'-sn-glycerol). 3 helical membrane-spanning segments follow: residues 194 to 214, 222 to 242, and 255 to 275; these read PSQLYQFALEGICLFAVVWLF, GQVASLFLGGYGIFRFIAEFA, and GLSMGQWLSVPMIVLGIVGFV.

Belongs to the Lgt family.

The protein localises to the cell inner membrane. The catalysed reaction is L-cysteinyl-[prolipoprotein] + a 1,2-diacyl-sn-glycero-3-phospho-(1'-sn-glycerol) = an S-1,2-diacyl-sn-glyceryl-L-cysteinyl-[prolipoprotein] + sn-glycerol 1-phosphate + H(+). It functions in the pathway protein modification; lipoprotein biosynthesis (diacylglyceryl transfer). Its function is as follows. Catalyzes the transfer of the diacylglyceryl group from phosphatidylglycerol to the sulfhydryl group of the N-terminal cysteine of a prolipoprotein, the first step in the formation of mature lipoproteins. This is Phosphatidylglycerol--prolipoprotein diacylglyceryl transferase from Neisseria meningitidis serogroup A / serotype 4A (strain DSM 15465 / Z2491).